Consider the following 513-residue polypeptide: Maturase K (513 aa).

It belongs to the intron maturase 2 family. MatK subfamily.

It localises to the plastid. Its subcellular location is the chloroplast. In terms of biological role, usually encoded in the trnK tRNA gene intron. Probably assists in splicing its own and other chloroplast group II introns. The sequence is that of Maturase K from Astrebla lappacea (Curly Mitchell grass).